A 161-amino-acid polypeptide reads, in one-letter code: 2-C-methyl-D-erythritol 2,4-cyclodiphosphate synthase (161 aa).

2 residues coordinate a divalent metal cation: Asp10 and His12. 4-CDP-2-C-methyl-D-erythritol 2-phosphate-binding positions include 10-12 and 36-37; these read DVH and HS. Residue His44 participates in a divalent metal cation binding. 4-CDP-2-C-methyl-D-erythritol 2-phosphate contacts are provided by residues 58-60, 63-67, and Arg144; these read DIG and FSDTD.

Belongs to the IspF family. As to quaternary structure, homotrimer. The cofactor is a divalent metal cation.

The catalysed reaction is 4-CDP-2-C-methyl-D-erythritol 2-phosphate = 2-C-methyl-D-erythritol 2,4-cyclic diphosphate + CMP. It functions in the pathway isoprenoid biosynthesis; isopentenyl diphosphate biosynthesis via DXP pathway; isopentenyl diphosphate from 1-deoxy-D-xylulose 5-phosphate: step 4/6. In terms of biological role, involved in the biosynthesis of isopentenyl diphosphate (IPP) and dimethylallyl diphosphate (DMAPP), two major building blocks of isoprenoid compounds. Catalyzes the conversion of 4-diphosphocytidyl-2-C-methyl-D-erythritol 2-phosphate (CDP-ME2P) to 2-C-methyl-D-erythritol 2,4-cyclodiphosphate (ME-CPP) with a corresponding release of cytidine 5-monophosphate (CMP). In Burkholderia cenocepacia (strain HI2424), this protein is 2-C-methyl-D-erythritol 2,4-cyclodiphosphate synthase.